A 560-amino-acid polypeptide reads, in one-letter code: Digoxin reductase (560 aa).

A signal peptide (tat-type signal) is located at residues 1 to 48; it reads MEYGKCRGIERGMGRRDFLKAATLLGATAAGAGMLAGCAPKSASEAQA.

This sequence belongs to the FAD-dependent oxidoreductase 2 family. May form a membrane-associated complex with Cgr1. The cofactor is FAD. Requires [4Fe-4S] cluster as cofactor. Predicted to be exported by the Tat system. The position of the signal peptide cleavage has not been experimentally proven.

The protein resides in the cell membrane. It catalyses the reaction digoxin + 2 Fe(II)-[cytochrome c] + 3 H(+) = dihydrodigoxin + 2 Fe(III)-[cytochrome c]. The enzyme catalyses digitoxin + 2 Fe(II)-[cytochrome c] + 3 H(+) = dihydrodigitoxin + 2 Fe(III)-[cytochrome c]. The catalysed reaction is digoxigenin + 2 Fe(II)-[cytochrome c] + 3 H(+) = dihydrodigoxigenin + 2 Fe(III)-[cytochrome c]. It carries out the reaction ouabain + 2 Fe(II)-[cytochrome c] + 3 H(+) = dihydroouabain + 2 Fe(III)-[cytochrome c]. It catalyses the reaction ouabagenin + 2 Fe(II)-[cytochrome c] + 3 H(+) = dihydroouabagenin + 2 Fe(III)-[cytochrome c]. In terms of biological role, involved in the inactivation of the cardiac medication and plant natural product digoxin, thus decreasing drug efficacy and toxicity. Catalyzes the reduction of the alpha,beta-unsaturated butyrolactone ring of digoxin to the inactive metabolite dihydrodigoxin. Likely uses the cytochrome Cgr1 as the physiological electron donor, encoded by the adjacent gene in the locus. Only reduces digoxin and other cardenolide toxins, such as digitoxin, digoxigenin, ouabain and ouabagenin. Therefore is a specialized enzyme present in some gut bacteria E.lenta that protects their human host against ingested plant toxins. The chain is Digoxin reductase from Eggerthella lenta (strain ATCC 25559 / DSM 2243 / CCUG 17323 / JCM 9979 / KCTC 3265 / NCTC 11813 / VPI 0255 / 1899 B) (Eubacterium lentum).